A 165-amino-acid chain; its full sequence is Large ribosomal subunit protein uL10 (165 aa).

This sequence belongs to the universal ribosomal protein uL10 family. Part of the ribosomal stalk of the 50S ribosomal subunit. The N-terminus interacts with L11 and the large rRNA to form the base of the stalk. The C-terminus forms an elongated spine to which L12 dimers bind in a sequential fashion forming a multimeric L10(L12)X complex.

In terms of biological role, forms part of the ribosomal stalk, playing a central role in the interaction of the ribosome with GTP-bound translation factors. In Paraburkholderia phymatum (strain DSM 17167 / CIP 108236 / LMG 21445 / STM815) (Burkholderia phymatum), this protein is Large ribosomal subunit protein uL10.